The chain runs to 492 residues: Transmembrane protein 39B (492 aa).

The tract at residues 1-53 is disordered; it reads MGGRRGPNRTSYYRNPLCEPGSSGASGGGHSSSASVSSVRSRSRTTSGTGLSS. Asparagine 8 is a glycosylation site (N-linked (GlcNAc...) asparagine). Residues 31 to 53 show a composition bias toward low complexity; it reads SSSASVSSVRSRSRTTSGTGLSS. 8 helical membrane passes run 77–97, 115–135, 153–175, 185–205, 288–308, 322–342, 421–441, and 447–467; these read SILF…VHYI, TSLN…IVLG, SLFR…GWSL, TYSF…IPFL, EVLV…VWFV, LFLL…LPAS, ILNI…YSLM, and HQTI…FKLL.

Belongs to the TMEM39 family.

Its subcellular location is the endoplasmic reticulum membrane. Its function is as follows. May protect the cells against DNA damage caused by exposure to the cold-warming stress and facilitates tissue damage repair during the recovery phase. In Mus musculus (Mouse), this protein is Transmembrane protein 39B.